We begin with the raw amino-acid sequence, 232 residues long: Probable transcriptional regulatory protein Bd1964 (232 aa).

Belongs to the TACO1 family.

Its subcellular location is the cytoplasm. This Bdellovibrio bacteriovorus (strain ATCC 15356 / DSM 50701 / NCIMB 9529 / HD100) protein is Probable transcriptional regulatory protein Bd1964.